We begin with the raw amino-acid sequence, 21 residues long: Preblooming protein 2 (21 aa).

In terms of biological role, possible mediator for cell division in the blooming process. In Prorocentrum triestinum (Red tide alga), this protein is Preblooming protein 2.